The following is a 315-amino-acid chain: KH domain-containing protein At5g56140 (315 aa).

Disordered stretches follow at residues 1-53 (MMMM…GGLR) and 136-158 (SQFPSERSVPSSPGPNWLNSPGS). A compositionally biased stretch (gly residues) spans 7–28 (LGGGGGGGGGSGGGIGGGGGGR). 2 stretches are compositionally biased toward polar residues: residues 31-53 (TYSSSLSVPPSAPQSPNYSGGLR) and 136-146 (SQFPSERSVPS). A KH domain is found at 171–238 (DIPVDNYPNF…EHLNEPLHIL (68 aa)). A disordered region spans residues 289–315 (REEGSPMSGSVSPYNSLGMKRAKTREG). Ser-300 bears the Phosphoserine mark.

It is found in the nucleus. This chain is KH domain-containing protein At5g56140, found in Arabidopsis thaliana (Mouse-ear cress).